Here is a 916-residue protein sequence, read N- to C-terminus: MYKNEFNSSWMSSFNSSYIDNLYNKFLLDPTSIDNSWYIVFTELSKENYINSTNKYLNNKFQDSKDTIKLTIELLINIFRTLGYKFAHLNPLDTFKNDNSLSLKKFLKSSEAFRIQDSYLVKLSQYVLDDITTKNVYDDYKNIYCKRIGYQFMHIHNSNEMNWIKNYIETKHSNILKKKKKIQILKHLIISEMLEKYFSSKFPSIKRFSIEGAESLIPMLKEVIKYTKKFNLHKIIFGMSHRGRLNVLANILDKPIKTIFNEFCENNSNNFNSGDVKYHMGFCCTKTIGLRKIILDLKSNPSHLEVINPVVVGSSRAYIDSNDNLNDENILPIIIHGDAAISGQGVVQELLNMSQARGYKVGGTIHIVVNNQIGFTTSKVKDLRTSQYCTDIAKMIDSPIFHVNADDPESVIFVTHLALNYRFCFKKDVFINLVCYRRHGHNEIDDPSITQPVLYSKIKNHPTTATSYYNKLLLKNIINKSFLITYQKKIKKKLDVEYNLHNKKMSEKRLKCCSIVKADYINVSNTPINNISQSDLTILAKKIFSIPNNIEVHNRVFKIYKDRLKMANNEKLFDWGASELLAYASLLNEGISCRLSGEDVCRGTFFHRHAVIHDQKNDSKYIPLKNIKLKQGNFYIWDSVLSEEATLAFEYGYSIDQKNTLNVWEAQFGDFANGAQIIIDQFICSGEQKWNVTCNLVMLLPHGYEGQGPEHSSARIERYLQLSANNNIKIIIPTISSQIYHIIRKQAFSLIKKPLIIMSPKSLLRFPLAASSLSELSNGKFRTVIDEIDNLDTKKVQRIILCSGKIYYDLLTQRRINQQKNIVILRIEQIYPRPTKKLSAILYNYKDVHDYIWCQEEPCNQGAWLYHKSYLKKLLPKHSKLNYVGRSSSASPATGYMKIHKEQQKKIIYDALNISD.

It belongs to the alpha-ketoglutarate dehydrogenase family. Homodimer. Part of the 2-oxoglutarate dehydrogenase (OGDH) complex composed of E1 (2-oxoglutarate dehydrogenase), E2 (dihydrolipoamide succinyltransferase) and E3 (dihydrolipoamide dehydrogenase); the complex contains multiple copies of the three enzymatic components (E1, E2 and E3). Requires thiamine diphosphate as cofactor.

It catalyses the reaction N(6)-[(R)-lipoyl]-L-lysyl-[protein] + 2-oxoglutarate + H(+) = N(6)-[(R)-S(8)-succinyldihydrolipoyl]-L-lysyl-[protein] + CO2. In terms of biological role, E1 component of the 2-oxoglutarate dehydrogenase (OGDH) complex which catalyzes the decarboxylation of 2-oxoglutarate, the first step in the conversion of 2-oxoglutarate to succinyl-CoA and CO(2). The protein is Oxoglutarate dehydrogenase (sucA) of Buchnera aphidicola subsp. Baizongia pistaciae (strain Bp).